The sequence spans 493 residues: Activin receptor type-1C (493 aa).

Positions 1 to 20 (MTRALCSALRQALLLLAAAA) are cleaved as a signal peptide. The Extracellular segment spans residues 22 to 113 (LSPGLKCVCL…PNAPKLGPME (92 aa)). The chain crosses the membrane as a helical span at residues 114-134 (LAIIITVPVCLLSIAAMLTVW). Topologically, residues 135–493 (ACQGRQCSYR…QLCVKEDCKA (359 aa)) are cytoplasmic. In terms of domain architecture, GS spans 165-194 (KTLKDLIYDVTASGSGSGLPLLVQRTIART). Residues 195–485 (IVLQEIVGKG…LRIKKTISQL (291 aa)) form the Protein kinase domain. ATP contacts are provided by residues 201-209 (VGKGRFGEV) and Lys222. Asp323 functions as the Proton acceptor in the catalytic mechanism.

The protein belongs to the protein kinase superfamily. TKL Ser/Thr protein kinase family. TGFB receptor subfamily. As to quaternary structure, binds the type 2 receptor protein ACVR2A. The cofactor is Mg(2+). It depends on Mn(2+) as a cofactor. In terms of tissue distribution, present in pancreas, heart, colon, small intestine, ovary and the hippocampus, medulla oblongata and putamen of the brain. Isoform 1, isoform 2, isoform 3 and isoform 4 are all expressed in the placenta throughout pregnancy.

The protein localises to the membrane. It carries out the reaction L-threonyl-[receptor-protein] + ATP = O-phospho-L-threonyl-[receptor-protein] + ADP + H(+). It catalyses the reaction L-seryl-[receptor-protein] + ATP = O-phospho-L-seryl-[receptor-protein] + ADP + H(+). Serine/threonine protein kinase which forms a receptor complex on ligand binding. The receptor complex consists of 2 type II and 2 type I transmembrane serine/threonine kinases. Type II receptors phosphorylate and activate type I receptors which autophosphorylate, then bind and activate SMAD transcriptional regulators, SMAD2 and SMAD3. Receptor for activin AB, activin B, activin E and NODAL. Upon NODAL binding, activation results in increased apoptosis and reduced proliferation through suppression of AKT signaling and the activation of Smad2-dependent signaling pathway in pancreatic beta-cells, trophoblasts, epithelial or neuronal cells. Acts as a positive regulator for macrophage activation partially through down-regulation of PPARG expression. The polypeptide is Activin receptor type-1C (Homo sapiens (Human)).